Consider the following 499-residue polypeptide: Guanosine-5'-triphosphate,3'-diphosphate pyrophosphatase (499 aa).

This sequence belongs to the GppA/Ppx family. GppA subfamily.

The enzyme catalyses guanosine 3'-diphosphate 5'-triphosphate + H2O = guanosine 3',5'-bis(diphosphate) + phosphate + H(+). The protein operates within purine metabolism; ppGpp biosynthesis; ppGpp from GTP: step 2/2. Catalyzes the conversion of pppGpp to ppGpp. Guanosine pentaphosphate (pppGpp) is a cytoplasmic signaling molecule which together with ppGpp controls the 'stringent response', an adaptive process that allows bacteria to respond to amino acid starvation, resulting in the coordinated regulation of numerous cellular activities. This is Guanosine-5'-triphosphate,3'-diphosphate pyrophosphatase from Sodalis glossinidius (strain morsitans).